Consider the following 219-residue polypeptide: Octanoyltransferase (219 aa).

The region spanning 32–207 is the BPL/LPL catalytic domain; sequence ASSPDQLWIV…TFSHNLGYQN (176 aa). Substrate contacts are provided by residues 71-78, 138-140, and 151-153; these read RGGQVTYH, SLG, and GLA. C169 functions as the Acyl-thioester intermediate in the catalytic mechanism.

Belongs to the LipB family.

Its subcellular location is the cytoplasm. The enzyme catalyses octanoyl-[ACP] + L-lysyl-[protein] = N(6)-octanoyl-L-lysyl-[protein] + holo-[ACP] + H(+). It functions in the pathway protein modification; protein lipoylation via endogenous pathway; protein N(6)-(lipoyl)lysine from octanoyl-[acyl-carrier-protein]: step 1/2. In terms of biological role, catalyzes the transfer of endogenously produced octanoic acid from octanoyl-acyl-carrier-protein onto the lipoyl domains of lipoate-dependent enzymes. Lipoyl-ACP can also act as a substrate although octanoyl-ACP is likely to be the physiological substrate. This Shewanella sediminis (strain HAW-EB3) protein is Octanoyltransferase.